A 321-amino-acid chain; its full sequence is Sialic acid-binding periplasmic protein SiaP (321 aa).

Residues 1-22 (MKTINKITIAILTLSAAASVNA) form the signal peptide.

Belongs to the bacterial solute-binding protein 7 family. The complex comprises the extracytoplasmic solute receptor protein SiaP, and the two transmembrane proteins SiaQ and SiaM.

It is found in the periplasm. Functionally, part of the tripartite ATP-independent periplasmic (TRAP) transport system SiaPQM that catalyzes unidirectional Na(+)-dependent sialic acid uptake. Binds the common sialic acid N-acetylneuraminic acid (Neu5Ac) with a high affinity. This Vibrio cholerae serotype O1 (strain ATCC 39315 / El Tor Inaba N16961) protein is Sialic acid-binding periplasmic protein SiaP.